The chain runs to 125 residues: Small ribosomal subunit protein uS12c (125 aa).

The protein belongs to the universal ribosomal protein uS12 family. In terms of assembly, part of the 30S ribosomal subunit.

The protein localises to the plastid. The protein resides in the chloroplast. In terms of biological role, with S4 and S5 plays an important role in translational accuracy. Located at the interface of the 30S and 50S subunits. The polypeptide is Small ribosomal subunit protein uS12c (rps12) (Tupiella akineta (Green alga)).